The sequence spans 469 residues: Neuraminidase (469 aa).

Topologically, residues 1–9 are intravirion; sequence MNPNQKIIT. A helical transmembrane segment spans residues 10–30; it reads IGSVSLTIATICFLMQIAILV. The interval 11-33 is involved in apical transport and lipid raft association; it reads GSVSLTIATICFLMQIAILVTTV. Residues 31–469 are Virion surface-facing; that stretch reads TTVTLHFKQY…DGADINLMPI (439 aa). Residues 36 to 88 are hypervariable stalk region; that stretch reads HFKQYECSSPPNNQVMPCEPIIIERNITEIVYLTNTTIEKEICPKLVEYRNWS. N-linked (GlcNAc...) asparagine; by host glycans are attached at residues Asn61, Asn70, and Asn86. The tract at residues 91–469 is head of neuraminidase; that stretch reads QCKITGFAPF…DGADINLMPI (379 aa). 8 disulfides stabilise this stretch: Cys92-Cys417, Cys124-Cys129, Cys183-Cys230, Cys232-Cys237, Cys278-Cys291, Cys280-Cys289, Cys318-Cys337, and Cys421-Cys447. Arg118 is a binding site for substrate. N-linked (GlcNAc...) asparagine; by host glycosylation occurs at Asn146. Asp151 acts as the Proton donor/acceptor in catalysis. Residue Arg152 participates in substrate binding. N-linked (GlcNAc...) asparagine; by host glycans are attached at residues Asn200 and Asn234. 276-277 contributes to the substrate binding site; that stretch reads EE. A substrate-binding site is contributed by Arg292. Residues Asp293, Gly297, and Asp324 each contribute to the Ca(2+) site. Position 371 (Arg371) interacts with substrate. Residue Asn402 is glycosylated (N-linked (GlcNAc...) asparagine; by host). Catalysis depends on Tyr406, which acts as the Nucleophile.

The protein belongs to the glycosyl hydrolase 34 family. As to quaternary structure, homotetramer. It depends on Ca(2+) as a cofactor. In terms of processing, N-glycosylated.

It localises to the virion membrane. The protein localises to the host apical cell membrane. It catalyses the reaction Hydrolysis of alpha-(2-&gt;3)-, alpha-(2-&gt;6)-, alpha-(2-&gt;8)- glycosidic linkages of terminal sialic acid residues in oligosaccharides, glycoproteins, glycolipids, colominic acid and synthetic substrates.. Its activity is regulated as follows. Inhibited by the neuraminidase inhibitors zanamivir (Relenza) and oseltamivir (Tamiflu). These drugs interfere with the release of progeny virus from infected cells and are effective against all influenza strains. Resistance to neuraminidase inhibitors is quite rare. Functionally, catalyzes the removal of terminal sialic acid residues from viral and cellular glycoconjugates. Cleaves off the terminal sialic acids on the glycosylated HA during virus budding to facilitate virus release. Additionally helps virus spread through the circulation by further removing sialic acids from the cell surface. These cleavages prevent self-aggregation and ensure the efficient spread of the progeny virus from cell to cell. Otherwise, infection would be limited to one round of replication. Described as a receptor-destroying enzyme because it cleaves a terminal sialic acid from the cellular receptors. May facilitate viral invasion of the upper airways by cleaving the sialic acid moieties on the mucin of the airway epithelial cells. Likely to plays a role in the budding process through its association with lipid rafts during intracellular transport. May additionally display a raft-association independent effect on budding. Plays a role in the determination of host range restriction on replication and virulence. Sialidase activity in late endosome/lysosome traffic seems to enhance virus replication. This Influenza A virus (strain A/Hong Kong/5/1983 H3N2) protein is Neuraminidase.